We begin with the raw amino-acid sequence, 260 residues long: (R)-2-hydroxyglutaryl-CoA dehydratase activating ATPase (260 aa).

ATP is bound at residue 12–16; sequence STASK. 2 residues coordinate [4Fe-4S] cluster: Cys127 and Cys166. Residues Gln220 and Gln243 each contribute to the ATP site.

It belongs to the HgdC family. In terms of assembly, homodimer. [4Fe-4S] cluster serves as cofactor. Mg(2+) is required as a cofactor.

It catalyses the reaction ATP + H2O = ADP + phosphate + H(+). It participates in amino-acid degradation; L-glutamate degradation via hydroxyglutarate pathway; crotonoyl-CoA from L-glutamate: step 4/5. Its activity is regulated as follows. Inactivated by exposure to air within less than 15 minutes. In terms of biological role, involved in the fermentation of L-glutamate via the hydroxyglutarate pathway. HgdC (CompA) has a very low ATPase activity, whose the role is to activate dehydratase HgdA-HgdB complex and then maintain an appropriate redox state via an ATP-dependent electron transfer. The dehydratase requires only catalytic amounts of ATP and substoichiometric amounts of HgdC (CompA) to be functional. The polypeptide is (R)-2-hydroxyglutaryl-CoA dehydratase activating ATPase (Acidaminococcus fermentans (strain ATCC 25085 / DSM 20731 / CCUG 9996 / CIP 106432 / VR4)).